Here is a 323-residue protein sequence, read N- to C-terminus: Prostaglandin F synthase 2 (323 aa).

NADP(+)-binding positions include 20-24 (GFGTY) and Asp50. Tyr55 functions as the Proton donor in the catalytic mechanism. His117 provides a ligand contact to substrate. Residues 166–167 (SN), Gln190, 216–221 (YAALGA), and 270–280 (KSFNKKRIKEN) contribute to the NADP(+) site.

It belongs to the aldo/keto reductase family. Monomer.

The protein localises to the cytoplasm. The catalysed reaction is prostaglandin F2alpha + NADP(+) = prostaglandin D2 + NADPH + H(+). It functions in the pathway lipid metabolism; prostaglandin biosynthesis. Its function is as follows. Catalyzes the reduction of PGD(2) and PGH(2) to PGF(2 alpha) and a stereoisomer, respectively. It has a broad substrate specificity and also reduces other carbonyl compounds. The chain is Prostaglandin F synthase 2 from Bos taurus (Bovine).